Here is a 214-residue protein sequence, read N- to C-terminus: Adenylate kinase (214 aa).

10-15 (GAGKGT) serves as a coordination point for ATP. The segment at 30-59 (CTGDMLRAAVKAGSELGLKAKEIMDAGKLV) is NMP. AMP contacts are provided by residues threonine 31, arginine 36, 57–59 (KLV), 85–88 (GFPR), and glutamine 92. Residues 122–159 (GRRVHAASGRVYHIKFNPPKVEDKDDVTGEELTIRKDD) are LID. ATP-binding positions include arginine 123 and 132 to 133 (VY). Arginine 156 and arginine 167 together coordinate AMP. Arginine 200 contributes to the ATP binding site.

This sequence belongs to the adenylate kinase family. In terms of assembly, monomer.

It is found in the cytoplasm. The enzyme catalyses AMP + ATP = 2 ADP. Its pathway is purine metabolism; AMP biosynthesis via salvage pathway; AMP from ADP: step 1/1. Catalyzes the reversible transfer of the terminal phosphate group between ATP and AMP. Plays an important role in cellular energy homeostasis and in adenine nucleotide metabolism. This chain is Adenylate kinase, found in Yersinia enterocolitica.